The following is a 251-amino-acid chain: B3 domain-containing protein At2g24670 (251 aa).

The segment at T48 to G111 is disordered. A compositionally biased stretch (basic and acidic residues) spans S56–T70. A DNA-binding region (TF-B3) is located at residues V153–Y249.

It localises to the nucleus. This Arabidopsis thaliana (Mouse-ear cress) protein is B3 domain-containing protein At2g24670.